A 140-amino-acid chain; its full sequence is Lipoprotein MlpD (140 aa).

Positions 1-17 (MKIINILFCLFLLMLNG) are cleaved as a signal peptide. Cysteine 18 carries the N-palmitoyl cysteine lipid modification. Cysteine 18 carries the S-diacylglycerol cysteine lipid modification. The interval 22–53 (DTNNSQTKSRQKRDLTQKEATQEKPKSKEELL) is disordered. Over residues 33–53 (KRDLTQKEATQEKPKSKEELL) the composition is skewed to basic and acidic residues.

It belongs to the Multicopy lipoprotein (Mlp) family.

It is found in the cell outer membrane. Functionally, an outer membrane protein that may participate in pathogenesis. Some human Lyme disease patients have antibodies against this protein. The Mlp proteins probably undergo intragenic recombination, generating new alleles. This chain is Lipoprotein MlpD, found in Borreliella burgdorferi (strain ATCC 35210 / DSM 4680 / CIP 102532 / B31) (Borrelia burgdorferi).